The chain runs to 273 residues: Tryptase-2 (273 aa).

A signal peptide spans 1 to 18 (MLHLLALALLLSLVSAAP). Positions 19 to 28 (APGQALQRSG) are cleaved as a propeptide — activation peptide. A Peptidase S1 domain is found at 29–270 (IIGGKEAPGS…YLDWIHQYVP (242 aa)). A disulfide bridge links Cys-57 with Cys-73. Active-site charge relay system residues include His-72 and Asp-119. Intrachain disulfides connect Cys-153/Cys-228, Cys-186/Cys-209, and Cys-218/Cys-246. Residue Ser-222 is the Charge relay system of the active site. N-linked (GlcNAc...) asparagine glycosylation is present at Asn-231.

The protein belongs to the peptidase S1 family. Tryptase subfamily. As to quaternary structure, homotetramer.

The protein resides in the secreted. It carries out the reaction Preferential cleavage: Arg-|-Xaa, Lys-|-Xaa, but with more restricted specificity than trypsin.. Functionally, tryptase is the major neutral protease present in mast cells and is secreted upon the coupled activation-degranulation response of this cell type. The protein is Tryptase-2 of Ovis aries (Sheep).